The chain runs to 100 residues: Large ribosomal subunit protein bL21 (100 aa).

It belongs to the bacterial ribosomal protein bL21 family. In terms of assembly, part of the 50S ribosomal subunit. Contacts protein L20.

This protein binds to 23S rRNA in the presence of protein L20. In Wolbachia pipientis subsp. Culex pipiens (strain wPip), this protein is Large ribosomal subunit protein bL21.